The sequence spans 379 residues: Chaperone protein DnaJ 2 (379 aa).

Residues 4–68 (DYYAVLGVRR…QKKQVYDLGG (65 aa)) enclose the J domain. The segment at 130-212 (GTTKDIQVDT…CAGDGRVPSR (83 aa)) adopts a CR-type zinc-finger fold. Zn(2+)-binding residues include cysteine 143, cysteine 146, cysteine 160, cysteine 163, cysteine 186, cysteine 189, cysteine 200, and cysteine 203. 4 CXXCXGXG motif repeats span residues 143-150 (CNTCNGEG), 160-167 (CDMCRGRG), 186-193 (CPQCQGFA), and 200-207 (CPECAGDG). Residues 351–379 (RGEERPTGQFQPGQQGLFSRLKDAFNGRS) are disordered. Residues 358-367 (GQFQPGQQGL) are compositionally biased toward polar residues. Basic and acidic residues predominate over residues 370–379 (RLKDAFNGRS).

The protein belongs to the DnaJ family. Homodimer. It depends on Zn(2+) as a cofactor.

The protein localises to the cytoplasm. Participates actively in the response to hyperosmotic and heat shock by preventing the aggregation of stress-denatured proteins and by disaggregating proteins, also in an autonomous, DnaK-independent fashion. Unfolded proteins bind initially to DnaJ; upon interaction with the DnaJ-bound protein, DnaK hydrolyzes its bound ATP, resulting in the formation of a stable complex. GrpE releases ADP from DnaK; ATP binding to DnaK triggers the release of the substrate protein, thus completing the reaction cycle. Several rounds of ATP-dependent interactions between DnaJ, DnaK and GrpE are required for fully efficient folding. Also involved, together with DnaK and GrpE, in the DNA replication of plasmids through activation of initiation proteins. The polypeptide is Chaperone protein DnaJ 2 (Streptomyces albus G).